Consider the following 34-residue polypeptide: Brevinin-2GHa (34 aa).

Cys27 and Cys33 are joined by a disulfide.

As to expression, expressed by the skin glands.

Its subcellular location is the secreted. Its function is as follows. Antimicrobial peptide. Active against the Gram-positive bacteria S.aureus FDA209P (MIC=14.9 ug/ml) and B.subtilis ATCC 6633 (MIC&gt;64 ug/ml), but not active against the Gram-negative bacterium E.coli or the fungus C.albicans. This chain is Brevinin-2GHa, found in Sylvirana guentheri (Gunther's frog).